The primary structure comprises 88 residues: Exodeoxyribonuclease 7 small subunit (88 aa).

The disordered stretch occupies residues 69–88; the sequence is DPMHPDDGEPFDPSLVSTSQ.

This sequence belongs to the XseB family. In terms of assembly, heterooligomer composed of large and small subunits.

The protein localises to the cytoplasm. It carries out the reaction Exonucleolytic cleavage in either 5'- to 3'- or 3'- to 5'-direction to yield nucleoside 5'-phosphates.. Bidirectionally degrades single-stranded DNA into large acid-insoluble oligonucleotides, which are then degraded further into small acid-soluble oligonucleotides. This is Exodeoxyribonuclease 7 small subunit from Xylella fastidiosa (strain M23).